A 348-amino-acid chain; its full sequence is Lysophosphatidic acid receptor 2 (348 aa).

At 1-30 (MGQCYYNETIGFFYNNSGKELSSHWRPKDV) the chain is on the extracellular side. N-linked (GlcNAc...) asparagine glycans are attached at residues asparagine 7 and asparagine 15. Residues 31–51 (VVVALGLTVSVLVLLTNLLVI) form a helical membrane-spanning segment. Residues 52–66 (AAIASNRRFHQPIYY) are Cytoplasmic-facing. Residues 67–87 (LLGNLAAADLFAGVAYLFLMF) form a helical membrane-spanning segment. Residues 88–100 (HTGPRTARLSLEG) lie on the Extracellular side of the membrane. A helical transmembrane segment spans residues 101–123 (WFLRQGLLDTSLTASVATLLAIA). At 124–143 (VERHRSVMAVQLHSRLPRGR) the chain is on the cytoplasmic side. A helical membrane pass occupies residues 144 to 164 (VVMLIVGVWVAALGLGLLPAH). Residues 165–185 (SWHCLCALDRCSRMAPLLSRS) are Extracellular-facing. Residues 186–206 (YLAVWALSSLLVFLLMVAVYT) traverse the membrane as a helical segment. Residues 207-239 (RIFFYVRRRVQRMAEHVSCHPRYRETTLSLVKT) lie on the Cytoplasmic side of the membrane. The chain crosses the membrane as a helical span at residues 240 to 260 (VVIILGAFVVCWTPGQVVLLL). The Extracellular portion of the chain corresponds to 261 to 276 (DGLGCESCNVLAVEKY). A helical transmembrane segment spans residues 277–294 (FLLLAEANSLVNAAVYSC). The Cytoplasmic portion of the chain corresponds to 295–348 (RDAEMRRTFRRLLCCACLRQSTRESVHYTSSAQGGASTRIMLPENGHPLMDSTL). Cysteine 308 is lipidated: S-palmitoyl cysteine. Positions 345–348 (DSTL) match the PDZ-binding motif.

Belongs to the G-protein coupled receptor 1 family. Interacts with SLC9A3R2/NHERF2, MAGI3 and PLCB3. Interacts with RALA and GRK2. Expressed most abundantly in testes and peripheral blood leukocytes with less expression in pancreas, spleen, thymus and prostate. Little or no expression in heart, brain, placenta, lung, liver, skeletal muscle, kidney, ovary, small intestine, or colon.

It is found in the cell surface. The protein resides in the cell membrane. In terms of biological role, receptor for lysophosphatidic acid (LPA), a mediator of diverse cellular activities. Seems to be coupled to the G(i)/G(o), G(12)/G(13), and G(q) families of heteromeric G proteins. Plays a key role in phospholipase C-beta (PLC-beta) signaling pathway. Stimulates phospholipase C (PLC) activity in a manner that is independent of RALA activation. The protein is Lysophosphatidic acid receptor 2 of Homo sapiens (Human).